A 30-amino-acid chain; its full sequence is PLPTTRGNPTGPKESKKEVESKTETDPFAW.

The interval 1-30 is disordered; sequence PLPTTRGNPTGPKESKKEVESKTETDPFAW. The Cell attachment site motif lies at 6 to 8; it reads RGN. The segment covering 13-30 has biased composition (basic and acidic residues); sequence KESKKEVESKTETDPFAW.

Belongs to the lentiviruses Tat family. Interacts with host CCNT1. Associates with the P-TEFb complex composed at least of Tat, P-TEFb (CDK9 and CCNT1), TAR RNA, RNA Pol II. Recruits the HATs CREBBP, TAF1/TFIID, EP300, PCAF and GCN5L2. Interacts with host KAT5/Tip60; this interaction targets the latter to degradation. Interacts with the host deacetylase SIRT1. Interacts with host capping enzyme RNGTT; this interaction stimulates RNGTT. Binds to host KDR, and to the host integrins ITGAV/ITGB3 and ITGA5/ITGB1. Interacts with host KPNB1/importin beta-1 without previous binding to KPNA1/importin alpha-1. Interacts with EIF2AK2. Interacts with host nucleosome assembly protein NAP1L1; this interaction may be required for the transport of Tat within the nucleus, since the two proteins interact at the nuclear rim. Interacts with host C1QBP/SF2P32; this interaction involves lysine-acetylated Tat. Interacts with the host chemokine receptors CCR2, CCR3 and CXCR4. Interacts with host DPP4/CD26; this interaction may trigger an anti-proliferative effect. Interacts with host LDLR. Interacts with the host extracellular matrix metalloproteinase MMP1. Interacts with host PRMT6; this interaction mediates Tat's methylation. Interacts with, and is ubiquitinated by MDM2/Hdm2. Interacts with host PSMC3 and HTATIP2. Interacts with STAB1; this interaction may overcome SATB1-mediated repression of IL2 and IL2RA (interleukin) in T cells by binding to the same domain than HDAC1. Interacts (when acetylated on Lys-50 and Lys-51) with human CDK13, thereby increasing HIV-1 mRNA splicing and promoting the production of the doubly spliced HIV-1 protein Nef. Acetylation by EP300, CREBBP, GCN5L2/GCN5 and PCAF regulates the transactivation activity of Tat. EP300-mediated acetylation of Lys-50 promotes dissociation of Tat from the TAR RNA through the competitive binding to PCAF's bromodomain. In addition, the non-acetylated Tat's N-terminus can also interact with PCAF. PCAF-mediated acetylation of Lys-28 enhances Tat's binding to CCNT1. Lys-50 is deacetylated by SIRT1. In terms of processing, phosphorylated by EIF2AK2 on serine and threonine residues adjacent to the basic region important for TAR RNA binding and function. Phosphorylation of Tat by EIF2AK2 is dependent on the prior activation of EIF2AK2 by dsRNA. Post-translationally, asymmetrical arginine methylation by host PRMT6 seems to diminish the transactivation capacity of Tat and affects the interaction with host CCNT1. Polyubiquitination by MDM2 does not target Tat to degradation, but activates its transactivation function and fosters interaction with CCNT1 and TAR RNA.

Its subcellular location is the host nucleus. The protein localises to the host nucleolus. It is found in the host cytoplasm. The protein resides in the secreted. Functionally, transcriptional activator that increases RNA Pol II processivity, thereby increasing the level of full-length viral transcripts. Recognizes a hairpin structure at the 5'-LTR of the nascent viral mRNAs referred to as the transactivation responsive RNA element (TAR) and recruits the cyclin T1-CDK9 complex (P-TEFb complex) that will in turn hyperphosphorylate the RNA polymerase II to allow efficient elongation. The CDK9 component of P-TEFb and other Tat-activated kinases hyperphosphorylate the C-terminus of RNA Pol II that becomes stabilized and much more processive. Other factors such as HTATSF1/Tat-SF1, SUPT5H/SPT5, and HTATIP2 are also important for Tat's function. Besides its effect on RNA Pol II processivity, Tat induces chromatin remodeling of proviral genes by recruiting the histone acetyltransferases (HATs) CREBBP, EP300 and PCAF to the chromatin. This also contributes to the increase in proviral transcription rate, especially when the provirus integrates in transcriptionally silent region of the host genome. To ensure maximal activation of the LTR, Tat mediates nuclear translocation of NF-kappa-B by interacting with host RELA. Through its interaction with host TBP, Tat may also modulate transcription initiation. Tat can reactivate a latently infected cell by penetrating in it and transactivating its LTR promoter. In the cytoplasm, Tat is thought to act as a translational activator of HIV-1 mRNAs. Its function is as follows. Extracellular circulating Tat can be endocytosed by surrounding uninfected cells via the binding to several surface receptors such as CD26, CXCR4, heparan sulfate proteoglycans (HSPG) or LDLR. Neurons are rarely infected, but they internalize Tat via their LDLR. Endosomal low pH allows Tat to cross the endosome membrane to enter the cytosol and eventually further translocate into the nucleus, thereby inducing severe cell dysfunctions ranging from cell activation to cell death. Through its interaction with nuclear HATs, Tat is potentially able to control the acetylation-dependent cellular gene expression. Tat seems to inhibit the HAT activity of KAT5/Tip60 and TAF1, and consequently modify the expression of specific cellular genes. Modulates the expression of many cellular genes involved in cell survival, proliferation or in coding for cytokines (such as IL10) or cytokine receptors. May be involved in the derepression of host interleukin IL2 expression. Mediates the activation of cyclin-dependent kinases and dysregulation of microtubule network. Tat plays a role in T-cell and neurons apoptosis. Tat induced neurotoxicity and apoptosis probably contribute to neuroAIDS. Host extracellular matrix metalloproteinase MMP1 cleaves Tat and decreases Tat's mediated neurotoxicity. Circulating Tat also acts as a chemokine-like and/or growth factor-like molecule that binds to specific receptors on the surface of the cells, affecting many cellular pathways. In the vascular system, Tat binds to ITGAV/ITGB3 and ITGA5/ITGB1 integrins dimers at the surface of endothelial cells and competes with bFGF for heparin-binding sites, leading to an excess of soluble bFGF. Binds to KDR/VEGFR-2. All these Tat-mediated effects enhance angiogenesis in Kaposi's sarcoma lesions. This Human immunodeficiency virus type 1 group M subtype A (isolate Z321) (HIV-1) protein is Protein Tat.